A 521-amino-acid polypeptide reads, in one-letter code: DEAD-box ATP-dependent RNA helicase 12 (521 aa).

The segment at Met1–Thr97 is disordered. Residues Thr13–Gly50 show a composition bias toward gly residues. The segment covering Arg51–Gln89 has biased composition (low complexity). The Q motif motif lies at Asn147 to Glu175. In terms of domain architecture, Helicase ATP-binding spans Ile178–Ile348. Ala191–Thr198 serves as a coordination point for ATP. A DEAD box motif is present at residues Asp296–Asp299. The Helicase C-terminal domain maps to Gly358–Val518.

The protein belongs to the DEAD box helicase family. DDX6/DHH1 subfamily.

The protein resides in the cytoplasm. It is found in the P-body. It carries out the reaction ATP + H2O = ADP + phosphate + H(+). Its function is as follows. ATP-dependent RNA helicase involved in mRNA turnover, and more specifically in mRNA decapping. The protein is DEAD-box ATP-dependent RNA helicase 12 of Oryza sativa subsp. japonica (Rice).